A 144-amino-acid polypeptide reads, in one-letter code: MRKFLIVLLLPLLVLAQEKMLYKEKIEGIPYEDVKILLKTALDGKNMNVLAVQDVSQKPRMTVFYVCNLSYGEKILRTFPEFGALAPCRIYILEKEDGSVEVGYINIPNLVKGFRKYLTPQAQEVFLQADKDIKEAIKEVKGGF.

The N-terminal stretch at M1–A16 is a signal peptide.

This is an uncharacterized protein from Aquifex aeolicus (strain VF5).